Reading from the N-terminus, the 698-residue chain is tRNA (guanine(37)-N(1))-methyltransferase (698 aa).

Positions 233 to 254 (DSTAHDSVQRNEGKTPKGPLDG) are disordered. The segment covering 234-247 (STAHDSVQRNEGKT) has biased composition (basic and acidic residues). S-adenosyl-L-methionine is bound by residues Arg394, 432–433 (DI), and 459–460 (DA). 2 disordered regions span residues 500–522 (PDQNNVDTGKRKKRESDRVGHVD) and 534–582 (KKKL…DAPR). Composition is skewed to basic and acidic residues over residues 513-522 (RESDRVGHVD), 539-550 (HADTNDPLEERP), and 569-582 (TNNDSEKTKEDAPR). Position 603 (Asn603) interacts with S-adenosyl-L-methionine.

It belongs to the class I-like SAM-binding methyltransferase superfamily. TRM5/TYW2 family. As to quaternary structure, monomer.

Its subcellular location is the mitochondrion matrix. The protein localises to the nucleus. It localises to the cytoplasm. The enzyme catalyses guanosine(37) in tRNA + S-adenosyl-L-methionine = N(1)-methylguanosine(37) in tRNA + S-adenosyl-L-homocysteine + H(+). Specifically methylates the N1 position of guanosine-37 in various cytoplasmic and mitochondrial tRNAs. Methylation is not dependent on the nature of the nucleoside 5' of the target nucleoside. This is the first step in the biosynthesis of wybutosine (yW), a modified base adjacent to the anticodon of tRNAs and required for accurate decoding. The sequence is that of tRNA (guanine(37)-N(1))-methyltransferase from Plasmodium knowlesi (strain H).